The following is a 1396-amino-acid chain: DNA ligase 6 (1396 aa).

Disordered regions lie at residues 441 to 464 (KNAC…DTTP) and 562 to 599 (MNLT…GPGQ). Short sequence motifs (nuclear localization signal) lie at residues 572–579 (GKRGKSSG) and 886–893 (LRKISVQT). ATP is bound at residue E1037. The N6-AMP-lysine intermediate role is filled by K1039. The ATP site is built by R1044, R1060, E1092, and F1136. Mg(2+) is bound at residue E1092. E1207 is a binding site for Mg(2+). ATP is bound by residues K1212, R1225, and K1231.

Belongs to the ATP-dependent DNA ligase family. Requires Mg(2+) as cofactor. Mostly expressed in buds and flowers, and, to a lower extent, in stems, leaves, siliques and seeds.

Its subcellular location is the nucleus. The enzyme catalyses ATP + (deoxyribonucleotide)n-3'-hydroxyl + 5'-phospho-(deoxyribonucleotide)m = (deoxyribonucleotide)n+m + AMP + diphosphate.. Its function is as follows. DNA ligase that seals nicks in double-stranded DNA during DNA replication, DNA recombination and DNA repair. Required to maintain seed viability (e.g. longevity and storability) and during seed germination, probably by repairing DNA damage accumulated during seed development, storage and/or imbibition. Facilitates seed germination in cold conditions (2 degrees Celsius) and under oxidative stress (e.g. menadione, a genotoxic agent). Involved in repair of X-ray-induced damage. Functionally, limits stable root transformation by A.tumefaciens T-DNA. The sequence is that of DNA ligase 6 from Arabidopsis thaliana (Mouse-ear cress).